The primary structure comprises 338 residues: Phosphate acyltransferase (338 aa).

The protein belongs to the PlsX family. In terms of assembly, homodimer. Probably interacts with PlsY.

The protein resides in the cytoplasm. The enzyme catalyses a fatty acyl-[ACP] + phosphate = an acyl phosphate + holo-[ACP]. Its pathway is lipid metabolism; phospholipid metabolism. Its function is as follows. Catalyzes the reversible formation of acyl-phosphate (acyl-PO(4)) from acyl-[acyl-carrier-protein] (acyl-ACP). This enzyme utilizes acyl-ACP as fatty acyl donor, but not acyl-CoA. The protein is Phosphate acyltransferase of Mannheimia succiniciproducens (strain KCTC 0769BP / MBEL55E).